The following is a 495-amino-acid chain: Cysteine-rich secretory protein LCCL domain-containing 2 (495 aa).

An N-terminal signal peptide occupies residues 1-22; it reads MSCLLNNMVLMGLALLVCGVQA. Asn-27 carries N-linked (GlcNAc...) asparagine glycosylation. The region spanning 60–200 is the SCP domain; sequence LMLHNKLRGQ…ENAVYLVCNY (141 aa). LCCL domains lie at 282–377 and 383–486; these read MTQV…SSSF and TETA…QNGN. Intrachain disulfides connect Cys-288/Cys-306, Cys-310/Cys-330, Cys-389/Cys-411, and Cys-415/Cys-438.

As to quaternary structure, binds to heparin, dermatan sulfate and chondroitin sulfate. In terms of tissue distribution, present in kidney renal tubules (at protein level).

The protein localises to the secreted. In terms of biological role, promotes matrix assembly. This Mus musculus (Mouse) protein is Cysteine-rich secretory protein LCCL domain-containing 2 (Crispld2).